The following is a 794-amino-acid chain: Alpha-1,3-galactosidase B (794 aa).

Residues 1–57 (MEGNLSFSLMEASGRSIFFLIEGIREQSIKNMFSRMFSWSFVVAACLAGLFPAQSQG) form the signal peptide. PbH1 repeat units follow at residues 468-499 (SEDF…HFSN), 609-631 (YPSV…LFTT), 632-654 (PERV…LLAG), 665-686 (CHEV…YQFT), and 707-728 (HRNV…LFAI).

This sequence belongs to the glycosyl hydrolase 110 family. B subfamily.

The catalysed reaction is Hydrolysis of terminal, non-reducing branched (1-&gt;3)-alpha-D-galactosidic residues, producing free D-galactose.. It catalyses the reaction Hydrolysis of terminal, non-reducing linear (1-&gt;3)-alpha-D-galactosidic residues, producing free D-galactose.. The enzyme catalyses Hydrolysis of terminal, non-reducing alpha-D-galactose residues in alpha-D-galactosides, including galactose oligosaccharides, galactomannans and galactolipids.. Functionally, alpha-galactosidase. Removes both branched alpha-1,3-linked galactose residues of blood group B antigens and linear alpha-1,3-linked galactose structures. The protein is Alpha-1,3-galactosidase B (glaB) of Akkermansia muciniphila (strain ATCC BAA-835 / DSM 22959 / JCM 33894 / BCRC 81048 / CCUG 64013 / CIP 107961 / Muc).